A 115-amino-acid polypeptide reads, in one-letter code: Cytochrome c oxidase subunit 3 (115 aa).

2 helical membrane-spanning segments follow: residues 32 to 52 (CLQGLLFTVLLGLYFSFLQGL) and 70 to 90 (FFLATGFHGLHVLIGTIFLMI).

It belongs to the cytochrome c oxidase subunit 3 family. Component of the cytochrome c oxidase (complex IV, CIV), a multisubunit enzyme composed of a catalytic core of 3 subunits and several supernumerary subunits. The complex exists as a monomer or a dimer and forms supercomplexes (SCs) in the inner mitochondrial membrane with ubiquinol-cytochrome c oxidoreductase (cytochrome b-c1 complex, complex III, CIII).

Its subcellular location is the mitochondrion inner membrane. It catalyses the reaction 4 Fe(II)-[cytochrome c] + O2 + 8 H(+)(in) = 4 Fe(III)-[cytochrome c] + 2 H2O + 4 H(+)(out). In terms of biological role, component of the cytochrome c oxidase, the last enzyme in the mitochondrial electron transport chain which drives oxidative phosphorylation. The respiratory chain contains 3 multisubunit complexes succinate dehydrogenase (complex II, CII), ubiquinol-cytochrome c oxidoreductase (cytochrome b-c1 complex, complex III, CIII) and cytochrome c oxidase (complex IV, CIV), that cooperate to transfer electrons derived from NADH and succinate to molecular oxygen, creating an electrochemical gradient over the inner membrane that drives transmembrane transport and the ATP synthase. Cytochrome c oxidase is the component of the respiratory chain that catalyzes the reduction of oxygen to water. Electrons originating from reduced cytochrome c in the intermembrane space (IMS) are transferred via the dinuclear copper A center (CU(A)) of subunit 2 and heme A of subunit 1 to the active site in subunit 1, a binuclear center (BNC) formed by heme A3 and copper B (CU(B)). The BNC reduces molecular oxygen to 2 water molecules using 4 electrons from cytochrome c in the IMS and 4 protons from the mitochondrial matrix. The protein is Cytochrome c oxidase subunit 3 (COIII) of Artemia salina (Brine shrimp).